The primary structure comprises 526 residues: ATP synthase subunit alpha (526 aa).

171 to 178 (GDRQTGKT) serves as a coordination point for ATP.

It belongs to the ATPase alpha/beta chains family. F-type ATPases have 2 components, CF(1) - the catalytic core - and CF(0) - the membrane proton channel. CF(1) has five subunits: alpha(3), beta(3), gamma(1), delta(1), epsilon(1). CF(0) has three main subunits: a(1), b(2) and c(9-12). The alpha and beta chains form an alternating ring which encloses part of the gamma chain. CF(1) is attached to CF(0) by a central stalk formed by the gamma and epsilon chains, while a peripheral stalk is formed by the delta and b chains.

Its subcellular location is the cell inner membrane. The catalysed reaction is ATP + H2O + 4 H(+)(in) = ADP + phosphate + 5 H(+)(out). In terms of biological role, produces ATP from ADP in the presence of a proton gradient across the membrane. The alpha chain is a regulatory subunit. The chain is ATP synthase subunit alpha from Cytophaga hutchinsonii (strain ATCC 33406 / DSM 1761 / CIP 103989 / NBRC 15051 / NCIMB 9469 / D465).